Reading from the N-terminus, the 572-residue chain is Proline--tRNA ligase (572 aa).

The protein belongs to the class-II aminoacyl-tRNA synthetase family. ProS type 1 subfamily. Homodimer.

The protein resides in the cytoplasm. The catalysed reaction is tRNA(Pro) + L-proline + ATP = L-prolyl-tRNA(Pro) + AMP + diphosphate. Catalyzes the attachment of proline to tRNA(Pro) in a two-step reaction: proline is first activated by ATP to form Pro-AMP and then transferred to the acceptor end of tRNA(Pro). As ProRS can inadvertently accommodate and process non-cognate amino acids such as alanine and cysteine, to avoid such errors it has two additional distinct editing activities against alanine. One activity is designated as 'pretransfer' editing and involves the tRNA(Pro)-independent hydrolysis of activated Ala-AMP. The other activity is designated 'posttransfer' editing and involves deacylation of mischarged Ala-tRNA(Pro). The misacylated Cys-tRNA(Pro) is not edited by ProRS. The polypeptide is Proline--tRNA ligase (Escherichia coli O9:H4 (strain HS)).